A 315-amino-acid chain; its full sequence is Protein LST8 homolog (315 aa).

WD repeat units lie at residues 1 to 31, 33 to 71, 76 to 115, 119 to 158, 161 to 200, 211 to 250, 253 to 292, and 295 to 315; these read MGDQLILATGGYDHTIKVWQAHTGNCIKTMR, VETSQVNALDRTPDKTRLAACGYQCIRLYDLESNCTAPV, GVQKNVTRLGFQEDGNWMFTAGEDHHVRIWDMISAPPHCS, DCESPVNAACLHPNQVEIGMGSQNGNVFLWDVKSEKHECI, EVDASIQDVAISPDGHYLAAANNKGNCYIWSLCSSPDQKM, AHTRYILRCKFSPDSRLLLTTSGDGTACLWKTSDFSKWRE, IENYWVWDAAFSADSKWLFTASSDGVARLWKLETKTPTRE, and GHTKAITALSFKDEIIRKVNH.

Belongs to the WD repeat LST8 family.

The protein localises to the cytoplasm. The sequence is that of Protein LST8 homolog from Drosophila pseudoobscura pseudoobscura (Fruit fly).